The sequence spans 382 residues: Protein PEP-RELATED DEVELOPMENT ARRESTED 1 homolog, chloroplastic (382 aa).

The transit peptide at 1 to 44 (MAILPLSISHSLTSALSATSSGIGRPVARLLHPRVPSRPTVICL) directs the protein to the chloroplast.

It localises to the plastid. The protein localises to the chloroplast stroma. It is found in the chloroplast nucleoid. In terms of biological role, plays an essential role in early steps of chloroplast development. May be involved in the redox control of plastid gene expression by maintening the redox state around chloroplast nucleoids. May positively regulate plastid-encoded RNA polymerase (PEP) activity. The polypeptide is Protein PEP-RELATED DEVELOPMENT ARRESTED 1 homolog, chloroplastic (Oryza sativa subsp. japonica (Rice)).